The chain runs to 261 residues: Enolase-phosphatase E1 (261 aa).

Residues aspartate 16 and glutamate 18 each contribute to the Mg(2+) site. Substrate-binding positions include 150–151 (SS) and lysine 184. Aspartate 209 is a binding site for Mg(2+).

It belongs to the HAD-like hydrolase superfamily. MasA/MtnC family. In terms of assembly, monomer. Requires Mg(2+) as cofactor.

The protein resides in the cytoplasm. Its subcellular location is the nucleus. The enzyme catalyses 5-methylsulfanyl-2,3-dioxopentyl phosphate + H2O = 1,2-dihydroxy-5-(methylsulfanyl)pent-1-en-3-one + phosphate. It functions in the pathway amino-acid biosynthesis; L-methionine biosynthesis via salvage pathway; L-methionine from S-methyl-5-thio-alpha-D-ribose 1-phosphate: step 3/6. The protein operates within amino-acid biosynthesis; L-methionine biosynthesis via salvage pathway; L-methionine from S-methyl-5-thio-alpha-D-ribose 1-phosphate: step 4/6. Functionally, bifunctional enzyme that catalyzes the enolization of 2,3-diketo-5-methylthiopentyl-1-phosphate (DK-MTP-1-P) into the intermediate 2-hydroxy-3-keto-5-methylthiopentenyl-1-phosphate (HK-MTPenyl-1-P), which is then dephosphorylated to form the acireductone 1,2-dihydroxy-3-keto-5-methylthiopentene (DHK-MTPene). This is Enolase-phosphatase E1 (Enoph1) from Rattus norvegicus (Rat).